Here is a 191-residue protein sequence, read N- to C-terminus: Cdc42 homolog (191 aa).

Position 10 to 17 (10 to 17 (GDGAVGKT)) interacts with GTP. Residues 32 to 40 (YVPTVFDNY) carry the Effector region motif. GTP contacts are provided by residues 57-61 (DTAGQ) and 115-118 (TQID). Residue cysteine 188 is modified to Cysteine methyl ester. Residue cysteine 188 is the site of S-geranylgeranyl cysteine attachment. A propeptide spans 189 to 191 (KFL) (removed in mature form).

This sequence belongs to the small GTPase superfamily. Rho family. CDC42 subfamily.

Its subcellular location is the cell junction. The protein resides in the adherens junction. The protein localises to the cell membrane. The catalysed reaction is GTP + H2O = GDP + phosphate + H(+). Regulates mbt kinase activity and is also required to recruit mbt to adherens junctions. Together with mbt, regulates photoreceptor cell morphogenesis. This Drosophila pseudoobscura pseudoobscura (Fruit fly) protein is Cdc42 homolog.